Consider the following 288-residue polypeptide: Lysosomal thioesterase PPT2-B (288 aa).

The N-terminal stretch at 1–20 is a signal peptide; that stretch reads MRGYLLLLPLLLCLVDNSVS. Cys95 and Cys103 are oxidised to a cystine. Ser97 serves as the catalytic Nucleophile. Asn143 carries N-linked (GlcNAc...) asparagine glycosylation. A disulfide bridge links Cys151 with Cys162. Asn192 is a glycosylation site (N-linked (GlcNAc...) asparagine). Residues Asp214 and His269 contribute to the active site. Asn275 carries an N-linked (GlcNAc...) asparagine glycan.

It belongs to the palmitoyl-protein thioesterase family.

It localises to the lysosome. It carries out the reaction hexadecanoyl-CoA + H2O = hexadecanoate + CoA + H(+). The enzyme catalyses S-hexadecanoyl-N-acetylcysteamine + H2O = N-acetylcysteamine + hexadecanoate + H(+). Its function is as follows. Catalyzes the cleavage of thioester bonds from S-palmitoyl-CoA or S-palmitoyl-N-acetylcysteamine (unbranched structures) but does not have activity against palmitoylcysteine or palmitoylated proteins, branched structures or bulky head groups. Conversely, hydrolyzes both long and short chain fatty acyl-CoA substrate. In Xenopus laevis (African clawed frog), this protein is Lysosomal thioesterase PPT2-B (ppt2-b).